The sequence spans 224 residues: UPF0758 protein VF_0126 (224 aa).

Positions Ala-102–Ile-224 constitute an MPN domain. Positions 173, 175, and 186 each coordinate Zn(2+). A JAMM motif motif is present at residues His-173 to Asp-186.

The protein belongs to the UPF0758 family.

This is UPF0758 protein VF_0126 from Aliivibrio fischeri (strain ATCC 700601 / ES114) (Vibrio fischeri).